The following is a 129-amino-acid chain: Small ribosomal subunit protein uS11 (129 aa).

It belongs to the universal ribosomal protein uS11 family. In terms of assembly, part of the 30S ribosomal subunit. Interacts with proteins S7 and S18. Binds to IF-3.

Functionally, located on the platform of the 30S subunit, it bridges several disparate RNA helices of the 16S rRNA. Forms part of the Shine-Dalgarno cleft in the 70S ribosome. The protein is Small ribosomal subunit protein uS11 of Hahella chejuensis (strain KCTC 2396).